Reading from the N-terminus, the 144-residue chain is Large ribosomal subunit protein uL11 (144 aa).

This sequence belongs to the universal ribosomal protein uL11 family. As to quaternary structure, part of the ribosomal stalk of the 50S ribosomal subunit. Interacts with L10 and the large rRNA to form the base of the stalk. L10 forms an elongated spine to which L12 dimers bind in a sequential fashion forming a multimeric L10(L12)X complex. One or more lysine residues are methylated.

Functionally, forms part of the ribosomal stalk which helps the ribosome interact with GTP-bound translation factors. The chain is Large ribosomal subunit protein uL11 from Streptomyces sp. (strain FRI-5).